A 171-amino-acid chain; its full sequence is CDP-archaeol synthase (171 aa).

5 helical membrane-spanning segments follow: residues 7–27 (IFWA…PVLV), 54–74 (GFIG…FITP), 84–104 (VKLA…GSFI), 115–135 (PAIG…AYPV), and 141–161 (GQII…NYFA).

Belongs to the CDP-archaeol synthase family. The cofactor is Mg(2+).

The protein localises to the cell membrane. The enzyme catalyses 2,3-bis-O-(geranylgeranyl)-sn-glycerol 1-phosphate + CTP + H(+) = CDP-2,3-bis-O-(geranylgeranyl)-sn-glycerol + diphosphate. It functions in the pathway membrane lipid metabolism; glycerophospholipid metabolism. In terms of biological role, catalyzes the formation of CDP-2,3-bis-(O-geranylgeranyl)-sn-glycerol (CDP-archaeol) from 2,3-bis-(O-geranylgeranyl)-sn-glycerol 1-phosphate (DGGGP) and CTP. This reaction is the third ether-bond-formation step in the biosynthesis of archaeal membrane lipids. This is CDP-archaeol synthase from Thermococcus kodakarensis (strain ATCC BAA-918 / JCM 12380 / KOD1) (Pyrococcus kodakaraensis (strain KOD1)).